We begin with the raw amino-acid sequence, 343 residues long: Heme A synthase (343 aa).

8 helical membrane-spanning segments follow: residues V13–A33, H96–I116, A130–L150, L161–D181, G197–A217, F258–A278, A294–V314, and L318–W338. H260 lines the heme pocket. H322 lines the heme pocket.

It belongs to the COX15/CtaA family. Type 2 subfamily. In terms of assembly, interacts with CtaB. The cofactor is heme b.

The protein resides in the cell membrane. It carries out the reaction Fe(II)-heme o + 2 A + H2O = Fe(II)-heme a + 2 AH2. It functions in the pathway porphyrin-containing compound metabolism; heme A biosynthesis; heme A from heme O: step 1/1. In terms of biological role, catalyzes the conversion of heme O to heme A by two successive hydroxylations of the methyl group at C8. The first hydroxylation forms heme I, the second hydroxylation results in an unstable dihydroxymethyl group, which spontaneously dehydrates, resulting in the formyl group of heme A. The chain is Heme A synthase from Caulobacter vibrioides (strain ATCC 19089 / CIP 103742 / CB 15) (Caulobacter crescentus).